A 271-amino-acid chain; its full sequence is 3-methyl-2-oxobutanoate hydroxymethyltransferase (271 aa).

Mg(2+)-binding residues include Asp49 and Asp88. Residues 49–50, Asp88, and Lys118 each bind 3-methyl-2-oxobutanoate; that span reads DS. Glu120 contributes to the Mg(2+) binding site. The active-site Proton acceptor is Glu187.

The protein belongs to the PanB family. Homodecamer; pentamer of dimers. Mg(2+) serves as cofactor.

It localises to the cytoplasm. The catalysed reaction is 3-methyl-2-oxobutanoate + (6R)-5,10-methylene-5,6,7,8-tetrahydrofolate + H2O = 2-dehydropantoate + (6S)-5,6,7,8-tetrahydrofolate. Its pathway is cofactor biosynthesis; (R)-pantothenate biosynthesis; (R)-pantoate from 3-methyl-2-oxobutanoate: step 1/2. Catalyzes the reversible reaction in which hydroxymethyl group from 5,10-methylenetetrahydrofolate is transferred onto alpha-ketoisovalerate to form ketopantoate. This Bartonella tribocorum (strain CIP 105476 / IBS 506) protein is 3-methyl-2-oxobutanoate hydroxymethyltransferase.